Here is a 554-residue protein sequence, read N- to C-terminus: MKNQDKKNGPAKHSNSKGSPGQREAGPEGAHGRPRQTAPGAEAEGSTSQAPGKTEGARAKAAQPGALCDVSEELSRQLEDILSTYCVDNNQGGPAEEGAQGEPTEPEDTEKSRTYAARNGEPEPGIPVVNGEKETSKGEPGTEEIRASDEVGDRDHRRPQEKKKAKGLGKEITLLMQTLNTLSTPEEKLAALCKKYAELLEEHRNSQKQMKLLQKKQSQLVQEKDHLRGEHSKAVLARSKLESLCRELQRHNRSLKEEGVQRAREEEEKRKEVTSHFQVTLNDIQLQMEQHNERNSKLRQENMELAERLKKLIEQYELREEHIDKVFKHKDLQQQLVDAKLQQAQEMLKEAEERHQREKEFLLKEAVESQRMCELMKQQETHLKQQLALYTEKFEEFQNTLSKSSEVFTTFKQEMEKMTKKIKKLEKETTMYRSRWESSNKALLEMAEEKTVRDKELEGLQVKIQRLEKLCRALQTERNDLNKRVQDLTAGGITDIGSERRPEATTASKEQGVESPGAQPASSPRATDAPCCSGAPSTGTAGQTGPGEPTPATA.

The interval 1–66 (MKNQDKKNGP…ARAKAAQPGA (66 aa)) is disordered. Position 71 is a phosphoserine (S71). Residues 85 to 166 (YCVDNNQGGP…RRPQEKKKAK (82 aa)) form a disordered region. The segment covering 91-103 (QGGPAEEGAQGEP) has biased composition (low complexity). The span at 143–158 (EEIRASDEVGDRDHRR) shows a compositional bias: basic and acidic residues. Positions 186 to 491 (EEKLAALCKK…NKRVQDLTAG (306 aa)) form a coiled coil. Positions 492 to 554 (GITDIGSERR…GPGEPTPATA (63 aa)) are disordered. 2 positions are modified to phosphoserine: S515 and S523.

Belongs to the taxilin family. In terms of assembly, binds to the C-terminal coiled coil region of syntaxin family members STX1A, STX3A and STX4A, but not when these proteins are complexed with SNAP25, VAMP2 or STXBP1, suggesting that it interacts with syntaxins that do not form the SNARE complex.

In terms of biological role, may be involved in intracellular vesicle traffic and potentially in calcium-dependent exocytosis in neuroendocrine cells. In Mus musculus (Mouse), this protein is Alpha-taxilin (Txlna).